Reading from the N-terminus, the 212-residue chain is Nitrogen regulatory protein P-II homolog (212 aa).

Composition is skewed to low complexity over residues 1 to 12, 32 to 46, and 63 to 74; these read MSSPATAAAAAA, TTTT…SRSR, and PPTAARAQSAAA. A chloroplast-targeting transit peptide spans 1–68; sequence MSSPATAAAA…PRRLPPTAAR (68 aa). The disordered stretch occupies residues 1 to 74; it reads MSSPATAAAA…TAARAQSAAA (74 aa). Residues 117–121 and 170–173 each bind ATP; these read GFGAQ and GDGK. Residue G119 coordinates Mg(2+).

The protein belongs to the P(II) protein family. As to quaternary structure, homodimer.

It localises to the plastid. Its subcellular location is the chloroplast. In terms of biological role, participates in sensing carbon and organic nitrogen status and regulates some steps of primary carbon and nitrogen metabolism. In Oryza sativa subsp. japonica (Rice), this protein is Nitrogen regulatory protein P-II homolog (GLB).